The sequence spans 318 residues: Glycine--tRNA ligase alpha subunit (318 aa).

The segment at 298-318 (EAGGSSPSTSRQGEAPRGESQ) is disordered. A compositionally biased stretch (polar residues) spans 300-309 (GGSSPSTSRQ).

This sequence belongs to the class-II aminoacyl-tRNA synthetase family. As to quaternary structure, tetramer of two alpha and two beta subunits.

The protein resides in the cytoplasm. It carries out the reaction tRNA(Gly) + glycine + ATP = glycyl-tRNA(Gly) + AMP + diphosphate. The sequence is that of Glycine--tRNA ligase alpha subunit from Rhodopseudomonas palustris (strain BisB18).